The sequence spans 1245 residues: Trafficking protein particle complex II-specific subunit 130 homolog (1245 aa).

2 disordered regions span residues 488 to 524 and 884 to 903; these read GDGS…TSLP and HVGG…TRKV. Low complexity-rich tracts occupy residues 495–507 and 888–898; these read ANSK…SASN and TDASKTSSSST.

This sequence belongs to the TMEM1 family. As to quaternary structure, part of the multisubunit TRAPP (transport protein particle) II complex composed of BET3, BET5, TRS20, TRS23, TRS31, TRS33, TRS65, TRS85, TRS120 and TRS130.

The protein localises to the golgi apparatus. It is found in the trans-Golgi network. The protein resides in the early endosome. In terms of biological role, specific subunit of the TRAPP II complex, a highly conserved vesicle tethering complex that is required for the proper transport of proteins in post-Golgi trafficking pathways to the growing cell plate in mitotic active cells. This chain is Trafficking protein particle complex II-specific subunit 130 homolog, found in Oryza sativa subsp. japonica (Rice).